The following is a 345-amino-acid chain: Dimethyladenosine transferase 1, mitochondrial (345 aa).

The N-terminal 27 residues, 1-27 (MAAPGKLSTCRLPPLPTIREIIKLFRL), are a transit peptide targeting the mitochondrion. S-adenosyl-L-methionine is bound by residues L38, G63, E85, K86, D111, V112, and N141.

This sequence belongs to the class I-like SAM-binding methyltransferase superfamily. rRNA adenine N(6)-methyltransferase family. KsgA subfamily. As to quaternary structure, interacts with mitochondrial RNA polymerase POLRMT. Interacts with TFAM. Bound to the maturing mtSSU until the late stages of assembly.

Its subcellular location is the mitochondrion. It carries out the reaction adenosine(N)/adenosine(N+1) in rRNA + 4 S-adenosyl-L-methionine = N(6)-dimethyladenosine(N)/N(6)-dimethyladenosine(N+1) in rRNA + 4 S-adenosyl-L-homocysteine + 4 H(+). Mitochondrial methyltransferase which uses S-adenosyl methionine to dimethylate two highly conserved adjacent adenosine residues (A1583 and A1584) within the loop of helix 45 at the 3-prime end of 12S rRNA, thereby regulating the assembly or stability of the small subunit of the mitochondrial ribosome. Also required for basal transcription of mitochondrial DNA, probably via its interaction with POLRMT and TFAM. Stimulates transcription independently of the methyltransferase activity. This is Dimethyladenosine transferase 1, mitochondrial (TFB1M) from Macaca fascicularis (Crab-eating macaque).